Reading from the N-terminus, the 1394-residue chain is Leucine-rich PPR motif-containing protein, mitochondrial (1394 aa).

A mitochondrion-targeting transit peptide spans 1–59 (MAALLRSARWLLRAGAAPRLPLSLRLLPGGPGRLHAASYLPAARAGPVAGGLLSPARLY). 8 PPR repeats span residues 126–160 (LLRS…GAVY), 161–195 (DVSH…NIQP), 196–230 (NRVT…DLPV), 231–265 (TEAV…GIEP), 266–300 (GPDT…ELHL), 301–335 (MDRD…RRYI), 403–437 (HSFP…GFPI), and 438–472 (RPHY…GVHP). An N6-acetyllysine mark is found at Lys155, Lys187, and Lys226. N6-acetyllysine is present on Lys292. Residues Lys463 and Lys613 each carry the N6-acetyllysine modification. PPR repeat units follow at residues 678–709 (IRDV…ESDM), 710–746 (VTGG…SAVL), 747–784 (DTGK…IKDT), 785–820 (TALS…LAEP), 821–856 (STNI…KVLP), and 954–988 (RDQM…NVIP). Residues 712–1067 (GGYAALINLC…AKEQNIVFNA (356 aa)) are interaction with BECN1 and Aedes aegypti venom allergen-1. Lys726 and Lys750 each carry N6-acetyllysine. Phosphoserine occurs at positions 1026, 1027, and 1029. PPR repeat units lie at residues 1031–1065 (TEPD…NIVF), 1066–1102 (NAET…GFTL), 1103–1137 (NDAA…QQTP), 1138–1175 (SRLA…IGLS), 1176–1210 (KMVF…ENKV), and 1317–1351 (KEEA…NTKL). The segment at 1121–1394 (KEAVTTLKTV…QLRKLRENSS (274 aa)) is RNA-binding. Thr1136 is modified (phosphothreonine). At Ser1138 the chain carries Phosphoserine.

Component of mRNP complexes associated with HNRPA1. Component of the complex, at least composed of LRPPRC, BECN1 and BCL2; the interactions prevent BECN1 from forming an autophagy-inducing complex with PIK3C3. Interacts with CECR2, HEBP2, MAP1S and UXT. Interacts with PPARGC1A. Interacts with FOXO1. Interacts (via N-terminus) with EIF4E; the interaction promotes association of EIF4E with 4ESE-containing mRNAs. Interacts with exportin XPO1/CRM1; interacts both alone and in complex with EIF4E and 4ESE-containing mRNAs to form an EIF4E-dependent mRNA export complex. Interacts with importin IPO8; the interaction occurs when LRPPRC is in its RNA-free form and returns LRPPRC to the nucleus for further export rounds. Interacts with BECN1. Interacts with Aedes aegypti venom allergen-1; the interaction interrupts BECN1 and LRPPRC association. Expressed ubiquitously. Expression is highest in heart, skeletal muscle, kidney and liver, intermediate in brain, non-mucosal colon, spleen and placenta, and lowest in small intestine, thymus, lung and peripheral blood leukocytes.

It localises to the mitochondrion. Its subcellular location is the nucleus. The protein resides in the nucleoplasm. The protein localises to the nucleus inner membrane. It is found in the nucleus outer membrane. May play a role in RNA metabolism in both nuclei and mitochondria. In the nucleus binds to HNRPA1-associated poly(A) mRNAs and is part of nmRNP complexes at late stages of mRNA maturation which are possibly associated with nuclear mRNA export. Positively modulates nuclear export of mRNAs containing the EIF4E sensitivity element (4ESE) by binding simultaneously to both EIF4E and the 4ESE and acting as a platform for assembly for the RNA export complex. Also binds to exportin XPO1/CRM1 to engage the nuclear pore and traffic the bound mRNAs to the cytoplasm. May bind mature mRNA in the nucleus outer membrane. In mitochondria binds to poly(A) mRNA. Plays a role in translation or stability of mitochondrially encoded cytochrome c oxidase (COX) subunits. May be involved in transcription regulation. Cooperates with PPARGC1A to regulate certain mitochondrially encoded genes and gluconeogenic genes and may regulate docking of PPARGC1A to transcription factors. Seems to be involved in the transcription regulation of the multidrug-related genes MDR1 and MVP. Part of a nuclear factor that binds to the invMED1 element of MDR1 and MVP gene promoters. Binds single-stranded DNA. Required for maintaining mitochondrial potential. Suppresses the initiation of basal levels of autophagy and mitophagy by sustaining BCL2 levels. In Homo sapiens (Human), this protein is Leucine-rich PPR motif-containing protein, mitochondrial (LRPPRC).